The chain runs to 76 residues: Small ribosomal subunit protein bS18 (76 aa).

It belongs to the bacterial ribosomal protein bS18 family. Part of the 30S ribosomal subunit. Forms a tight heterodimer with protein bS6.

Functionally, binds as a heterodimer with protein bS6 to the central domain of the 16S rRNA, where it helps stabilize the platform of the 30S subunit. The protein is Small ribosomal subunit protein bS18 of Stenotrophomonas maltophilia (strain R551-3).